The following is a 421-amino-acid chain: Putative NBPF family member NBPF7 (421 aa).

A coiled-coil region spans residues 87–143 (IKSMLREELQFKEEKLAEQLKQAEELRQYKVLVHSQERELIQLREKLREGRDASHSL). Disordered stretches follow at residues 179 to 251 (VHKL…KITS), 312 to 334 (EKEVLQDSPEERVTTSCSDHDVS), and 402 to 421 (YNSKPSSIPNTTLQGSFTED). 2 Olduvai domains span residues 190-279 (EDEN…NILL) and 280-391 (ENQN…RMSQ). Residues 194-217 (DKTKELDKVQESPAPREEQKAEEK) show a composition bias toward basic and acidic residues. The span at 230-243 (TYSNSHGPSDSNPP) shows a compositional bias: polar residues. The segment covering 312 to 333 (EKEVLQDSPEERVTTSCSDHDV) has biased composition (basic and acidic residues). The segment covering 403 to 421 (NSKPSSIPNTTLQGSFTED) has biased composition (polar residues).

Belongs to the NBPF family.

It localises to the cytoplasm. This is Putative NBPF family member NBPF7 from Homo sapiens (Human).